The primary structure comprises 355 residues: UDP-3-O-acylglucosamine N-acyltransferase (355 aa).

Catalysis depends on His-248, which acts as the Proton acceptor.

This sequence belongs to the transferase hexapeptide repeat family. LpxD subfamily. Homotrimer.

The catalysed reaction is a UDP-3-O-[(3R)-3-hydroxyacyl]-alpha-D-glucosamine + a (3R)-hydroxyacyl-[ACP] = a UDP-2-N,3-O-bis[(3R)-3-hydroxyacyl]-alpha-D-glucosamine + holo-[ACP] + H(+). It functions in the pathway bacterial outer membrane biogenesis; LPS lipid A biosynthesis. In terms of biological role, catalyzes the N-acylation of UDP-3-O-acylglucosamine using 3-hydroxyacyl-ACP as the acyl donor. Is involved in the biosynthesis of lipid A, a phosphorylated glycolipid that anchors the lipopolysaccharide to the outer membrane of the cell. The protein is UDP-3-O-acylglucosamine N-acyltransferase of Synechococcus elongatus (strain ATCC 33912 / PCC 7942 / FACHB-805) (Anacystis nidulans R2).